Consider the following 341-residue polypeptide: Acetylpolyamine amidohydrolase (341 aa).

Residues Tyr-19, Glu-106, and Glu-117 each coordinate substrate. Residue His-159 is the Proton donor/acceptor of the active site. 3 residues coordinate Zn(2+): Asp-195, His-197, and Asp-284. Tyr-323 contributes to the substrate binding site.

It belongs to the histone deacetylase family. Homodimer. Zn(2+) is required as a cofactor.

The enzyme catalyses N-acetylputrescine + H2O = putrescine + acetate. It catalyses the reaction N-acetylcadaverine + H2O = cadaverine + acetate. It carries out the reaction N(1)-acetylspermine + H2O = spermine + acetate. The catalysed reaction is N(1)-acetylspermidine + H2O = spermidine + acetate. The enzyme catalyses N(8)-acetylspermidine + H2O = spermidine + acetate. It participates in amine and polyamine metabolism. With respect to regulation, zinc ions inhibit enzyme activity in a dose-dependent manner. Inhibited by KCl at concentrations above 10 mM. Inhibited by o-oxyquinoline in vitro, suggesting that it is a metalloprotein. Inhibited by various substrate N(8)-acetylspermidine analogs bearing different metal-binding groups such as trifluoromethylketone, thiol, or hydroxamate, and by hydroxamate analogs of short-chain acetyldiamines. In terms of biological role, involved in polyamine metabolism. Catalyzes the deacetylation of various acetylated polyamines such as N-acetylputrescine, N-acetylcadaverine, N(1)-acetylspermine, N(1)-acetylspermidine and N(8)-acetylspermidine. In vitro, is also able to deacetylate L-Lys(epsilon-acetyl)coumarin, but has very low activity towards the larger tetrapeptide N-acetyl-L-Arg-L-His-L-Lys(epsilon-acetyl)-L-Lys(epsilon-acetyl)coumarin. In Mycoplana ramosa (Mycoplana bullata), this protein is Acetylpolyamine amidohydrolase.